Reading from the N-terminus, the 104-residue chain is N(4)-acetylcytidine amidohydrolase (104 aa).

One can recognise an ASCH domain in the interval 6–102 (ITFYQRFEAD…SEFWVIEIRL (97 aa)). The Proton acceptor role is filled by Lys21. The Nucleophile role is filled by Thr24. The Proton donor role is filled by Glu74.

Belongs to the N(4)-acetylcytidine amidohydrolase family.

The catalysed reaction is N(4)-acetylcytidine + H2O = cytidine + acetate + H(+). The enzyme catalyses N(4)-acetyl-2'-deoxycytidine + H2O = 2'-deoxycytidine + acetate + H(+). It carries out the reaction N(4)-acetylcytosine + H2O = cytosine + acetate + H(+). In terms of biological role, catalyzes the hydrolysis of N(4)-acetylcytidine (ac4C). This Haemophilus influenzae (strain PittEE) protein is N(4)-acetylcytidine amidohydrolase.